We begin with the raw amino-acid sequence, 623 residues long: Aspartate--tRNA(Asp/Asn) ligase (623 aa).

Glu175 lines the L-aspartate pocket. The tract at residues 199-202 is aspartate; it reads QQYK. Residues Arg221 and His483 each contribute to the L-aspartate site. 221-223 contacts ATP; sequence RDE. Glu517 contributes to the ATP binding site. Arg524 serves as a coordination point for L-aspartate. ATP is bound at residue 569–572; the sequence is GVDR.

Belongs to the class-II aminoacyl-tRNA synthetase family. Type 1 subfamily. In terms of assembly, homodimer.

It is found in the cytoplasm. The catalysed reaction is tRNA(Asx) + L-aspartate + ATP = L-aspartyl-tRNA(Asx) + AMP + diphosphate. Aspartyl-tRNA synthetase with relaxed tRNA specificity since it is able to aspartylate not only its cognate tRNA(Asp) but also tRNA(Asn). Reaction proceeds in two steps: L-aspartate is first activated by ATP to form Asp-AMP and then transferred to the acceptor end of tRNA(Asp/Asn). The sequence is that of Aspartate--tRNA(Asp/Asn) ligase from Xanthobacter autotrophicus (strain ATCC BAA-1158 / Py2).